The sequence spans 542 residues: Chaperonin GroEL 2 (542 aa).

ATP contacts are provided by residues 30-33 (TLGP), Lys51, 87-91 (DGTTT), Gly415, and Asp495.

The protein belongs to the chaperonin (HSP60) family. In terms of assembly, forms a cylinder of 14 subunits composed of two heptameric rings stacked back-to-back. Interacts with the co-chaperonin GroES.

The protein localises to the cytoplasm. The enzyme catalyses ATP + H2O + a folded polypeptide = ADP + phosphate + an unfolded polypeptide.. Functionally, together with its co-chaperonin GroES, plays an essential role in assisting protein folding. The GroEL-GroES system forms a nano-cage that allows encapsulation of the non-native substrate proteins and provides a physical environment optimized to promote and accelerate protein folding. This is Chaperonin GroEL 2 from Methylococcus capsulatus (strain ATCC 33009 / NCIMB 11132 / Bath).